Here is a 232-residue protein sequence, read N- to C-terminus: Flagellar L-ring protein (232 aa).

The first 21 residues, 1-21 (MQKNAAHTYAISSLLVLSLTG), serve as a signal peptide directing secretion. C22 carries the N-palmitoyl cysteine lipid modification. The S-diacylglycerol cysteine moiety is linked to residue C22.

It belongs to the FlgH family. As to quaternary structure, the basal body constitutes a major portion of the flagellar organelle and consists of four rings (L,P,S, and M) mounted on a central rod.

It is found in the cell outer membrane. Its subcellular location is the bacterial flagellum basal body. Assembles around the rod to form the L-ring and probably protects the motor/basal body from shearing forces during rotation. This chain is Flagellar L-ring protein, found in Escherichia coli O6:H1 (strain CFT073 / ATCC 700928 / UPEC).